A 294-amino-acid polypeptide reads, in one-letter code: Probable cobalamin biosynthesis protein CobD (294 aa).

A run of 4 helical transmembrane segments spans residues 52-72, 73-93, 145-165, and 268-288; these read AGLL…IVPF, YAPF…SFAI, DSVV…AVIY, and IYWL…ATGV.

The protein belongs to the CobD/CbiB family.

It is found in the cell membrane. It participates in cofactor biosynthesis; adenosylcobalamin biosynthesis. In terms of biological role, converts cobyric acid to cobinamide by the addition of aminopropanol on the F carboxylic group. In Thermococcus kodakarensis (strain ATCC BAA-918 / JCM 12380 / KOD1) (Pyrococcus kodakaraensis (strain KOD1)), this protein is Probable cobalamin biosynthesis protein CobD.